Here is a 426-residue protein sequence, read N- to C-terminus: 3-phosphoshikimate 1-carboxyvinyltransferase (426 aa).

Residues K22, S23, and R27 each coordinate 3-phosphoshikimate. K22 provides a ligand contact to phosphoenolpyruvate. Phosphoenolpyruvate is bound by residues G96 and R124. S170, S171, Q172, S198, D314, N337, and K341 together coordinate 3-phosphoshikimate. Q172 serves as a coordination point for phosphoenolpyruvate. Residue D314 is the Proton acceptor of the active site. Phosphoenolpyruvate contacts are provided by R345, R387, and K412.

The protein belongs to the EPSP synthase family. In terms of assembly, monomer.

The protein resides in the cytoplasm. It catalyses the reaction 3-phosphoshikimate + phosphoenolpyruvate = 5-O-(1-carboxyvinyl)-3-phosphoshikimate + phosphate. The protein operates within metabolic intermediate biosynthesis; chorismate biosynthesis; chorismate from D-erythrose 4-phosphate and phosphoenolpyruvate: step 6/7. Catalyzes the transfer of the enolpyruvyl moiety of phosphoenolpyruvate (PEP) to the 5-hydroxyl of shikimate-3-phosphate (S3P) to produce enolpyruvyl shikimate-3-phosphate and inorganic phosphate. This Aliivibrio fischeri (strain MJ11) (Vibrio fischeri) protein is 3-phosphoshikimate 1-carboxyvinyltransferase.